The primary structure comprises 152 residues: Transcriptional repressor NrdR (152 aa).

Residues 3–34 fold into a zinc finger; the sequence is CPHCHHNGSRVIDSRPAEDGMSIRRRRECVNC. The 91-residue stretch at 49 to 139 folds into the ATP-cone domain; that stretch reads LLVVKKDGTR…VYRQFKDVDA (91 aa).

Belongs to the NrdR family. Requires Zn(2+) as cofactor.

Its function is as follows. Negatively regulates transcription of bacterial ribonucleotide reductase nrd genes and operons by binding to NrdR-boxes. This chain is Transcriptional repressor NrdR, found in Limosilactobacillus fermentum (strain NBRC 3956 / LMG 18251) (Lactobacillus fermentum).